A 329-amino-acid chain; its full sequence is Sex comb on midleg-like protein 1 (329 aa).

2 positions are modified to phosphoserine: S138 and S238. Positions 258 to 325 (WSVEAVVLFL…YYIDRLKQGK (68 aa)) constitute an SAM domain.

This sequence belongs to the SCM family.

Its subcellular location is the nucleus. Its function is as follows. Putative Polycomb group (PcG) protein. PcG proteins act by forming multiprotein complexes, which are required to maintain the transcriptionally repressive state of homeotic genes throughout development. May be involved in spermatogenesis during sexual maturation. The chain is Sex comb on midleg-like protein 1 (SCML1) from Nomascus leucogenys (Northern white-cheeked gibbon).